Here is a 456-residue protein sequence, read N- to C-terminus: GPI-anchored protein 13 (456 aa).

A signal peptide spans 1 to 23 (MRSPSLAVAATTVLGLFSSSALA). Asn-27 carries an N-linked (GlcNAc...) asparagine glycan. Gly-433 is lipidated: GPI-anchor amidated glycine. Residues 434-456 (AAAVNVVPTTAFGLFAIILASIF) constitute a propeptide, removed in mature form.

In terms of processing, the GPI-anchor is attached to the protein in the endoplasmic reticulum and serves to target the protein to the cell surface. There, the glucosamine-inositol phospholipid moiety is cleaved off and the GPI-modified mannoprotein is covalently attached via its lipidless GPI glycan remnant to the 1,6-beta-glucan of the outer cell wall layer.

It localises to the secreted. The protein localises to the cell wall. It is found in the membrane. In terms of biological role, cell wall protein which contributes to cell wall synthesis and is important for acquiring normal surface properties. Required for virulence in a mouse infection model. The protein is GPI-anchored protein 13 (PGA13) of Candida albicans (strain SC5314 / ATCC MYA-2876) (Yeast).